A 361-amino-acid chain; its full sequence is Beta-hexosaminidase (361 aa).

Residues aspartate 69, arginine 77, arginine 144, and 174-175 contribute to the substrate site; that span reads KH. The active-site Proton donor/acceptor is the histidine 187. Residue aspartate 258 is the Nucleophile of the active site.

This sequence belongs to the glycosyl hydrolase 3 family. NagZ subfamily.

The protein localises to the cytoplasm. It carries out the reaction Hydrolysis of terminal non-reducing N-acetyl-D-hexosamine residues in N-acetyl-beta-D-hexosaminides.. It participates in cell wall biogenesis; peptidoglycan recycling. Plays a role in peptidoglycan recycling by cleaving the terminal beta-1,4-linked N-acetylglucosamine (GlcNAc) from peptide-linked peptidoglycan fragments, giving rise to free GlcNAc, anhydro-N-acetylmuramic acid and anhydro-N-acetylmuramic acid-linked peptides. The polypeptide is Beta-hexosaminidase (Neisseria gonorrhoeae (strain NCCP11945)).